The chain runs to 379 residues: dTDP-3-amino-3,4,6-trideoxy-alpha-D-glucose transaminase (379 aa).

Residues glycine 67, glutamine 167, 188–193, tyrosine 221, tyrosine 227, 235–237, and tyrosine 318 each bind pyridoxal 5'-phosphate; these read SFYPGK and NSR. Lysine 193 is subject to N6-(pyridoxal phosphate)lysine.

This sequence belongs to the degT/dnrJ/eryC1 family. Homodimer. Requires pyridoxal 5'-phosphate as cofactor.

The enzyme catalyses dTDP-3-amino-3,4,6-trideoxy-alpha-D-glucose + 2-oxoglutarate = dTDP-3-dehydro-4,6-dideoxy-alpha-D-glucose + L-glutamate. It functions in the pathway antibiotic biosynthesis. In terms of biological role, involved in the biosynthesis of dTDP-alpha-D-desosamine, a sugar found in several bacterial macrolide antibiotics. Catalyzes the reversible transfer of the amino group from L-glutamate to the C-3 position of dTDP-3-keto-4,6-deoxyglucose to yield dTDP-3-amino-3,4,6-trideoxyglucose. This is dTDP-3-amino-3,4,6-trideoxy-alpha-D-glucose transaminase from Streptomyces venezuelae.